We begin with the raw amino-acid sequence, 481 residues long: Bifunctional protein HldE (481 aa).

The ribokinase stretch occupies residues 1–318 (MKVTLPDFRR…ENAIRGRAET (318 aa)). 195 to 198 (NLSE) is an ATP binding site. Residue Asp264 is part of the active site. A cytidylyltransferase region spans residues 344–481 (MTNGIFDILH…KRRAGQRTVV (138 aa)).

This sequence in the N-terminal section; belongs to the carbohydrate kinase PfkB family. The protein in the C-terminal section; belongs to the cytidylyltransferase family. In terms of assembly, homodimer.

It carries out the reaction D-glycero-beta-D-manno-heptose 7-phosphate + ATP = D-glycero-beta-D-manno-heptose 1,7-bisphosphate + ADP + H(+). It catalyses the reaction D-glycero-beta-D-manno-heptose 1-phosphate + ATP + H(+) = ADP-D-glycero-beta-D-manno-heptose + diphosphate. It participates in nucleotide-sugar biosynthesis; ADP-L-glycero-beta-D-manno-heptose biosynthesis; ADP-L-glycero-beta-D-manno-heptose from D-glycero-beta-D-manno-heptose 7-phosphate: step 1/4. Its pathway is nucleotide-sugar biosynthesis; ADP-L-glycero-beta-D-manno-heptose biosynthesis; ADP-L-glycero-beta-D-manno-heptose from D-glycero-beta-D-manno-heptose 7-phosphate: step 3/4. Catalyzes the phosphorylation of D-glycero-D-manno-heptose 7-phosphate at the C-1 position to selectively form D-glycero-beta-D-manno-heptose-1,7-bisphosphate. In terms of biological role, catalyzes the ADP transfer from ATP to D-glycero-beta-D-manno-heptose 1-phosphate, yielding ADP-D-glycero-beta-D-manno-heptose. In Sodalis glossinidius (strain morsitans), this protein is Bifunctional protein HldE.